A 312-amino-acid chain; its full sequence is Taste receptor type 2 member 9 (312 aa).

At 1–9 (MPSAIEAIY) the chain is on the extracellular side. Residues 10–32 (IILIAGELTIGIWGNGFIVLVNC) form a helical membrane-spanning segment. Residues 33-52 (IDWLKRRDISLIDIILISLA) lie on the Cytoplasmic side of the membrane. A helical membrane pass occupies residues 53-72 (ISRICLLCVISLDGFFMLLF). The Extracellular segment spans residues 73–86 (PGTYGNSVLVSIVN). The helical transmembrane segment at 87 to 109 (VVWTFANNSSLWFTSCLSIFYLL) threads the bilayer. The Cytoplasmic portion of the chain corresponds to 110–128 (KIANISHPFFFWLKLKINK). A helical membrane pass occupies residues 129-146 (VMLAILLGSFLISLIISV). Over 147 to 180 (PKNDDMWYHLFKVSHEENITWKFKVSKIPGTFKQ) the chain is Extracellular. Residue Asn-164 is glycosylated (N-linked (GlcNAc...) asparagine). The chain crosses the membrane as a helical span at residues 181–203 (LTLNLGVMVPFILCLISFFLLLF). Over 204–234 (SLVRHTKQIRLHATGFRDPSTEAHMRAIKAV) the chain is Cytoplasmic. Residues 235-257 (IIFLLLLIVYYPVFLVMTSSALI) traverse the membrane as a helical segment. Residues 258–261 (PQGK) are Extracellular-facing. The chain crosses the membrane as a helical span at residues 262 to 284 (LVLMIGDIVTVIFPSSHSFILIM). At 285–312 (GNSKLREAFLKMLRFVKCFLRRRKPFVP) the chain is on the cytoplasmic side.

It belongs to the G-protein coupled receptor T2R family. In terms of tissue distribution, expressed in subsets of taste receptor cells of the tongue and palate epithelium and exclusively in gustducin-positive cells.

The protein localises to the membrane. Gustducin-coupled receptor implicated in the perception of bitter compounds in the oral cavity and the gastrointestinal tract. Signals through PLCB2 and the calcium-regulated cation channel TRPM5. This Homo sapiens (Human) protein is Taste receptor type 2 member 9 (TAS2R9).